Here is a 258-residue protein sequence, read N- to C-terminus: Transcription cofactor vestigial-like protein 1 (258 aa).

Polar residues-rich tracts occupy residues proline 55–glutamate 65 and serine 74–threonine 87. The tract at residues proline 55 to valine 93 is disordered.

This sequence belongs to the vestigial family. As to quaternary structure, interacts with TEFs.

It is found in the nucleus. Its function is as follows. May act as a specific coactivator for the mammalian TEFs. This is Transcription cofactor vestigial-like protein 1 (VGLL1) from Homo sapiens (Human).